The chain runs to 229 residues: Cilia- and flagella-associated protein 95 (229 aa).

Topologically, residues 1–123 (MDSLDRSCQD…LLNEETVSSG (123 aa)) are extracellular. Asparagine 75 is a glycosylation site (N-linked (GlcNAc...) asparagine). The chain crosses the membrane as a helical span at residues 124–140 (IIERVTGLPATGFGAVF). Topologically, residues 141-229 (PRHPPDWSKM…PLTSGPIVPI (89 aa)) are cytoplasmic. The interval 153–163 (LTTYSEDYVPP) is mn.

As to quaternary structure, microtubule inner protein component of sperm flagellar doublet microtubules. Interacts with MYH9. Interacts with MYH10. In terms of tissue distribution, expressed in undifferentiated embryonic stem cells. Expressed in airway epithelial cells.

The protein localises to the cytoplasm. It localises to the cytoskeleton. The protein resides in the cilium axoneme. It is found in the flagellum axoneme. Its subcellular location is the cell membrane. Functionally, microtubule inner protein (MIP) part of the dynein-decorated doublet microtubules (DMTs) in cilia axoneme, which is required for motile cilia beating. This chain is Cilia- and flagella-associated protein 95, found in Homo sapiens (Human).